Here is an 839-residue protein sequence, read N- to C-terminus: Lon protease (839 aa).

In terms of domain architecture, Lon N-terminal spans 31–224; sequence LFLIPIKSRP…KVLLFLKKEI (194 aa). 377–384 lines the ATP pocket; the sequence is GPPGVGKT. A Lon proteolytic domain is found at 613–790; it reads ASVPGTALGL…EEVALLLFDE (178 aa). Active-site residues include Ser-696 and Lys-739. The interval 807–839 is disordered; that stretch reads IVNPTRKLSPKKKTTQKQKLSLSKQKGNNQKKK. Low complexity predominate over residues 823–832; that stretch reads KQKLSLSKQK.

The protein belongs to the peptidase S16 family. As to quaternary structure, homohexamer. Organized in a ring with a central cavity.

Its subcellular location is the cytoplasm. It catalyses the reaction Hydrolysis of proteins in presence of ATP.. Functionally, ATP-dependent serine protease that mediates the selective degradation of mutant and abnormal proteins as well as certain short-lived regulatory proteins. Required for cellular homeostasis and for survival from DNA damage and developmental changes induced by stress. Degrades polypeptides processively to yield small peptide fragments that are 5 to 10 amino acids long. Binds to DNA in a double-stranded, site-specific manner. The polypeptide is Lon protease (Leptospira interrogans serogroup Icterohaemorrhagiae serovar copenhageni (strain Fiocruz L1-130)).